Reading from the N-terminus, the 392-residue chain is Chorismate synthase (392 aa).

Arg40 and Arg46 together coordinate NADP(+). FMN is bound by residues 135–137 (RAS), 256–257 (QA), Gly300, 315–319 (KPIAT), and Arg341.

It belongs to the chorismate synthase family. As to quaternary structure, homotetramer. Requires FMNH2 as cofactor.

The enzyme catalyses 5-O-(1-carboxyvinyl)-3-phosphoshikimate = chorismate + phosphate. Its pathway is metabolic intermediate biosynthesis; chorismate biosynthesis; chorismate from D-erythrose 4-phosphate and phosphoenolpyruvate: step 7/7. Functionally, catalyzes the anti-1,4-elimination of the C-3 phosphate and the C-6 proR hydrogen from 5-enolpyruvylshikimate-3-phosphate (EPSP) to yield chorismate, which is the branch point compound that serves as the starting substrate for the three terminal pathways of aromatic amino acid biosynthesis. This reaction introduces a second double bond into the aromatic ring system. This is Chorismate synthase from Nocardioides sp. (strain ATCC BAA-499 / JS614).